Reading from the N-terminus, the 348-residue chain is MSESAKPRITSGSKFRNEHGFSAIKDGVKRSSSNTEGKSLERKPKWLRARMPGGERYDAVRRNVTEHRLSTVCQESHCPNIGECWTNGTATIMVMGSVCTRACKFCAVDTGNPKGWLDPEEPENTAKSVELMGLRYIVLTSVDRDDLPDGGAAHYAACVSAIKQRTPEVAVEALTPDFDAVMSDVEKVVDSGLDVFAQNVETVKRLTSRVRDPRAGYEKTLSVLAHAKKHRPDVLTKTSLMLGLGETEEEILETMDDLRAIGVDILTLGQYLRPTPNHLPVERYVTPEEFNRYRDIGLEKGFMEVPSGPMVRSSYRADRVFDKNNLGLSVPEVPVPDKAMQIPVKAVD.

A disordered region spans residues Met1–Lys45. Residues Cys73, Cys78, Cys84, Cys99, Cys103, Cys106, and Ser314 each contribute to the [4Fe-4S] cluster site. The Radical SAM core domain maps to Trp85–Met303.

It belongs to the radical SAM superfamily. Lipoyl synthase family. It depends on [4Fe-4S] cluster as a cofactor.

The protein resides in the cytoplasm. It carries out the reaction [[Fe-S] cluster scaffold protein carrying a second [4Fe-4S](2+) cluster] + N(6)-octanoyl-L-lysyl-[protein] + 2 oxidized [2Fe-2S]-[ferredoxin] + 2 S-adenosyl-L-methionine + 4 H(+) = [[Fe-S] cluster scaffold protein] + N(6)-[(R)-dihydrolipoyl]-L-lysyl-[protein] + 4 Fe(3+) + 2 hydrogen sulfide + 2 5'-deoxyadenosine + 2 L-methionine + 2 reduced [2Fe-2S]-[ferredoxin]. Its pathway is protein modification; protein lipoylation via endogenous pathway; protein N(6)-(lipoyl)lysine from octanoyl-[acyl-carrier-protein]: step 2/2. Its function is as follows. Catalyzes the radical-mediated insertion of two sulfur atoms into the C-6 and C-8 positions of the octanoyl moiety bound to the lipoyl domains of lipoate-dependent enzymes, thereby converting the octanoylated domains into lipoylated derivatives. The sequence is that of Lipoyl synthase from Marinobacter nauticus (strain ATCC 700491 / DSM 11845 / VT8) (Marinobacter aquaeolei).